Reading from the N-terminus, the 207-residue chain is Guanylate kinase (207 aa).

The Guanylate kinase-like domain maps to 17-197 (GRLVVLAGPS…SCDELVSLLV (181 aa)). 24 to 31 (GPSAVGKS) provides a ligand contact to ATP.

Belongs to the guanylate kinase family.

It localises to the cytoplasm. The catalysed reaction is GMP + ATP = GDP + ADP. Essential for recycling GMP and indirectly, cGMP. This chain is Guanylate kinase, found in Rhodococcus jostii (strain RHA1).